Reading from the N-terminus, the 47-residue chain is Protein DVU_0533 (47 aa).

Residues 18 to 37 (WTYILMGVTLLVYVGYWLFL) traverse the membrane as a helical segment.

The protein localises to the cell membrane. Its function is as follows. HMWC (high-molecular-weight cytochrome c), ORF2, ORF3, ORF4, ORF5 and ORF6 in the HMC operon form a transmembrane protein complex that allows electron flow from the periplasmic hydrogenase to the cytoplasmic enzymes that catalyze reduction of sulfates. This Nitratidesulfovibrio vulgaris (strain ATCC 29579 / DSM 644 / CCUG 34227 / NCIMB 8303 / VKM B-1760 / Hildenborough) (Desulfovibrio vulgaris) protein is Protein DVU_0533.